A 79-amino-acid chain; its full sequence is Sec-independent protein translocase protein TatA (79 aa).

A helical membrane pass occupies residues 1–21 (MGSFSIWHWLIVLAIVVLVFG). A disordered region spans residues 43–79 (VKDGSTSTDTPAAAPGQVAGQTAADKTTIDVEAKQKG). Basic and acidic residues predominate over residues 69–79 (TTIDVEAKQKG).

This sequence belongs to the TatA/E family. As to quaternary structure, the Tat system comprises two distinct complexes: a TatABC complex, containing multiple copies of TatA, TatB and TatC subunits, and a separate TatA complex, containing only TatA subunits. Substrates initially bind to the TatABC complex, which probably triggers association of the separate TatA complex to form the active translocon.

It localises to the cell inner membrane. Functionally, part of the twin-arginine translocation (Tat) system that transports large folded proteins containing a characteristic twin-arginine motif in their signal peptide across membranes. TatA could form the protein-conducting channel of the Tat system. This chain is Sec-independent protein translocase protein TatA, found in Delftia acidovorans (strain DSM 14801 / SPH-1).